The following is a 63-amino-acid chain: Megourin-1 (63 aa).

In terms of assembly, monomer. Contains four disulfide bonds.

The protein resides in the secreted. Its function is as follows. Has antimicrobial activity against Gram-positive bacteria and fungi. In Megoura viciae (Vetch aphid), this protein is Megourin-1.